The following is a 181-amino-acid chain: Alkyl hydroperoxide reductase AhpD (181 aa).

Cys131 serves as the catalytic Proton donor. Cys131 and Cys134 are joined by a disulfide. The Cysteine sulfenic acid (-SOH) intermediate role is filled by Cys134.

This sequence belongs to the AhpD family.

It carries out the reaction N(6)-[(R)-dihydrolipoyl]-L-lysyl-[lipoyl-carrier protein] + a hydroperoxide = N(6)-[(R)-lipoyl]-L-lysyl-[lipoyl-carrier protein] + an alcohol + H2O. Functionally, antioxidant protein with alkyl hydroperoxidase activity. Required for the reduction of the AhpC active site cysteine residues and for the regeneration of the AhpC enzyme activity. This Azorhizobium caulinodans (strain ATCC 43989 / DSM 5975 / JCM 20966 / LMG 6465 / NBRC 14845 / NCIMB 13405 / ORS 571) protein is Alkyl hydroperoxide reductase AhpD.